A 717-amino-acid polypeptide reads, in one-letter code: Acetone carboxylase beta subunit (717 aa).

As to quaternary structure, heterohexamer of two alpha, two beta and two gamma subunits. It depends on Fe cation as a cofactor. Requires Mg(2+) as cofactor. Zn(2+) is required as a cofactor. In terms of processing, the N-terminus is blocked.

The enzyme catalyses acetone + hydrogencarbonate + 2 ATP + 3 H2O = acetoacetate + 2 AMP + 4 phosphate + 4 H(+). Functionally, catalyzes the carboxylation of acetone to form acetoacetate. Has a reduced activity on butanone, and no activity on 2-pentatone, 3-pentatone, 2-hexanone, chloroacetone, pyruvate, phosphoenolpyruvate, acetaldehyde, propionaldehyde and propylene oxide. The protein is Acetone carboxylase beta subunit of Xanthobacter autotrophicus (strain ATCC BAA-1158 / Py2).